The primary structure comprises 468 residues: Secreted triacylglycerol lipase LIP2 (468 aa).

Positions 1-22 (MFGFRLFILAAVALAYIQCAAA) are cleaved as a signal peptide. An intrachain disulfide couples Cys125 to Cys295. Ser209 serves as the catalytic Nucleophile. Residues Asn242, Asn252, and Asn279 are each glycosylated (N-linked (GlcNAc...) asparagine). Catalysis depends on residues Asp355 and His389.

It belongs to the AB hydrolase superfamily. Lipase family. Class Lip subfamily.

It localises to the secreted. It carries out the reaction a triacylglycerol + H2O = a diacylglycerol + a fatty acid + H(+). It catalyses the reaction a monoacylglycerol + H2O = glycerol + a fatty acid + H(+). The catalysed reaction is a diacylglycerol + H2O = a monoacylglycerol + a fatty acid + H(+). Its function is as follows. Secreted lipase that hydrolyzes acylglycerol lipids such as triacylglycerols and consequently releases free fatty acid. Due to an absence of fatty acid synthase genes in Malassezia species, secretory lipases are essential for the yeast to generate free fatty acids from degradation of sebum and assimilate them as lipid sources for growth. Plays important roles not only in lipid metabolism but also in the immune response of host cells and pathogenesis. This Malassezia furfur (Pityriasis versicolor infection agent) protein is Secreted triacylglycerol lipase LIP2.